A 259-amino-acid chain; its full sequence is Pyridoxine 5'-phosphate synthase (259 aa).

Asn6 provides a ligand contact to 3-amino-2-oxopropyl phosphate. 8-9 serves as a coordination point for 1-deoxy-D-xylulose 5-phosphate; that stretch reads DH. Residue Arg17 participates in 3-amino-2-oxopropyl phosphate binding. The active-site Proton acceptor is the His42. Residues Arg44 and His49 each contribute to the 1-deoxy-D-xylulose 5-phosphate site. The active-site Proton acceptor is Glu69. 1-deoxy-D-xylulose 5-phosphate is bound at residue Thr99. His212 (proton donor) is an active-site residue. 3-amino-2-oxopropyl phosphate-binding positions include Gly213 and 234-235; that span reads GH.

The protein belongs to the PNP synthase family. In terms of assembly, homooctamer; tetramer of dimers.

Its subcellular location is the cytoplasm. It catalyses the reaction 3-amino-2-oxopropyl phosphate + 1-deoxy-D-xylulose 5-phosphate = pyridoxine 5'-phosphate + phosphate + 2 H2O + H(+). It participates in cofactor biosynthesis; pyridoxine 5'-phosphate biosynthesis; pyridoxine 5'-phosphate from D-erythrose 4-phosphate: step 5/5. Functionally, catalyzes the complicated ring closure reaction between the two acyclic compounds 1-deoxy-D-xylulose-5-phosphate (DXP) and 3-amino-2-oxopropyl phosphate (1-amino-acetone-3-phosphate or AAP) to form pyridoxine 5'-phosphate (PNP) and inorganic phosphate. The polypeptide is Pyridoxine 5'-phosphate synthase (Nautilia profundicola (strain ATCC BAA-1463 / DSM 18972 / AmH)).